The chain runs to 88 residues: UPF0237 protein SMU_72 (88 aa).

An ACT domain is found at 4 to 77; sequence IITVVGKDRT…ETLNVKINIQ (74 aa).

It belongs to the UPF0237 family. Homodimer.

This is UPF0237 protein SMU_72 from Streptococcus mutans serotype c (strain ATCC 700610 / UA159).